The following is a 472-amino-acid chain: Probable diguanylate cyclase DgcF (472 aa).

8 helical membrane passes run 21-41 (SIAI…LRLV), 44-64 (LSLF…YVWL), 90-110 (VSLA…LLVV), 128-148 (LFNY…IGSV), 167-187 (FSTG…GVLP), 198-218 (IALI…SLAF), 237-257 (LLTF…VIDI), and 273-293 (LGIA…AAIN). The GGDEF domain occupies 330 to 467 (QHLTVMLLDI…GRNRTSTMRY (138 aa)). Residues Asp-338 and Ile-339 each coordinate Mg(2+). 3 residues coordinate substrate: Asn-346, His-351, and Asp-355. Glu-381 provides a ligand contact to Mg(2+).

Homodimer. Requires Mg(2+) as cofactor.

The protein localises to the cell membrane. The enzyme catalyses 2 GTP = 3',3'-c-di-GMP + 2 diphosphate. Its pathway is purine metabolism; 3',5'-cyclic di-GMP biosynthesis. Its function is as follows. Catalyzes the synthesis of cyclic-di-GMP (c-di-GMP) via the condensation of 2 GTP molecules. The chain is Probable diguanylate cyclase DgcF from Escherichia coli O157:H7.